The sequence spans 277 residues: Energy-coupling factor transporter ATP-binding protein EcfA (277 aa).

An ABC transporter domain is found at 4 to 238 (LETRDLTHIY…PELLTQTRLD (235 aa)). 37-44 (GPNGAGKS) serves as a coordination point for ATP.

It belongs to the ABC transporter superfamily. Energy-coupling factor EcfA family. In terms of assembly, forms a stable energy-coupling factor (ECF) transporter complex composed of 2 membrane-embedded substrate-binding proteins (S component), 2 ATP-binding proteins (A component) and 2 transmembrane proteins (T component).

It localises to the cell membrane. ATP-binding (A) component of a common energy-coupling factor (ECF) ABC-transporter complex. Unlike classic ABC transporters this ECF transporter provides the energy necessary to transport a number of different substrates. This chain is Energy-coupling factor transporter ATP-binding protein EcfA, found in Methanoculleus marisnigri (strain ATCC 35101 / DSM 1498 / JR1).